The chain runs to 145 residues: Ribosome-binding factor A (145 aa).

Residues 1–10 (MKRPSSHGRR) are compositionally biased toward basic residues. 2 disordered regions span residues 1 to 21 (MKRPSSHGRRPPQGPSQRQLR) and 124 to 145 (DDPKVRQDLTPQPPSDSWKDED).

This sequence belongs to the RbfA family. As to quaternary structure, monomer. Binds 30S ribosomal subunits, but not 50S ribosomal subunits or 70S ribosomes.

The protein localises to the cytoplasm. One of several proteins that assist in the late maturation steps of the functional core of the 30S ribosomal subunit. Associates with free 30S ribosomal subunits (but not with 30S subunits that are part of 70S ribosomes or polysomes). Required for efficient processing of 16S rRNA. May interact with the 5'-terminal helix region of 16S rRNA. This Phenylobacterium zucineum (strain HLK1) protein is Ribosome-binding factor A.